The sequence spans 98 residues: MPIIYTNIVLAFMISLLGMLIYRSHLMSSLLCLEGMMLSLFMMSTLMALNMHFPLANIVPIALLVFAACEAAVGLALLISISNTYGLDHIHNLNLLQC.

3 helical membrane-spanning segments follow: residues 1 to 21, 29 to 49, and 58 to 78; these read MPII…GMLI, SLLC…LMAL, and IVPI…LALL.

This sequence belongs to the complex I subunit 4L family. Core subunit of respiratory chain NADH dehydrogenase (Complex I) which is composed of 45 different subunits.

The protein resides in the mitochondrion inner membrane. It carries out the reaction a ubiquinone + NADH + 5 H(+)(in) = a ubiquinol + NAD(+) + 4 H(+)(out). In terms of biological role, core subunit of the mitochondrial membrane respiratory chain NADH dehydrogenase (Complex I) which catalyzes electron transfer from NADH through the respiratory chain, using ubiquinone as an electron acceptor. Part of the enzyme membrane arm which is embedded in the lipid bilayer and involved in proton translocation. This Nasalis larvatus (Proboscis monkey) protein is NADH-ubiquinone oxidoreductase chain 4L (MT-ND4L).